Here is a 239-residue protein sequence, read N- to C-terminus: LexA repressor (239 aa).

The H-T-H motif DNA-binding region spans F26–T46. Catalysis depends on for autocatalytic cleavage activity residues S159 and K197.

The protein belongs to the peptidase S24 family. In terms of assembly, homodimer.

The enzyme catalyses Hydrolysis of Ala-|-Gly bond in repressor LexA.. Represses a number of genes involved in the response to DNA damage (SOS response), including recA and lexA. In the presence of single-stranded DNA, RecA interacts with LexA causing an autocatalytic cleavage which disrupts the DNA-binding part of LexA, leading to derepression of the SOS regulon and eventually DNA repair. The chain is LexA repressor from Allorhizobium ampelinum (strain ATCC BAA-846 / DSM 112012 / S4) (Agrobacterium vitis (strain S4)).